Consider the following 103-residue polypeptide: Cytotoxin-like protein TA-BMBGT3 (103 aa).

Positions 1-21 (MKTLLLTLVVVTIICLDLGYT) are cleaved as a signal peptide. Cystine bridges form between Cys-24/Cys-45, Cys-27/Cys-37, Cys-38/Cys-72, Cys-76/Cys-90, and Cys-91/Cys-96.

The protein belongs to the three-finger toxin family. Ancestral subfamily. Orphan group XVII sub-subfamily. As to expression, expressed by the venom gland.

Its subcellular location is the secreted. In Bungarus multicinctus (Many-banded krait), this protein is Cytotoxin-like protein TA-BMBGT3.